The primary structure comprises 385 residues: Aldehyde dehydrogenase family 3 member B2 (385 aa).

An NAD(+)-binding site is contributed by 107–112 (GSPRVG). Active-site residues include glutamate 129 and cysteine 163. Cysteine 382 carries the cysteine methyl ester modification. A lipid anchor (S-geranylgeranyl cysteine) is attached at cysteine 382. A propeptide spans 383-385 (TLL) (removed in mature form).

This sequence belongs to the aldehyde dehydrogenase family. Geranylgeranylation is important for localization to lipid droplets and enzyme activity. Salivary gland. Expressed at protein level in placenta.

The protein resides in the lipid droplet. It carries out the reaction an aldehyde + NAD(+) + H2O = a carboxylate + NADH + 2 H(+). It catalyses the reaction a long-chain fatty aldehyde + NAD(+) + H2O = a long-chain fatty acid + NADH + 2 H(+). The catalysed reaction is a medium-chain fatty aldehyde + NAD(+) + H2O = a medium-chain fatty acid + NADH + 2 H(+). The enzyme catalyses hexadecanoate + NADH + 2 H(+) = hexadecanal + NAD(+) + H2O. It carries out the reaction octanal + NAD(+) + H2O = octanoate + NADH + 2 H(+). It participates in alcohol metabolism; ethanol degradation; acetate from ethanol: step 2/2. Functionally, oxidizes medium and long chain fatty aldehydes in lipid droplets into non-toxic fatty acids. This Homo sapiens (Human) protein is Aldehyde dehydrogenase family 3 member B2 (ALDH3B2).